The chain runs to 264 residues: uncharacterized protein (264 aa).

The tract at residues 1–20 is disordered; that stretch reads MENIEKKCQPETINEDNNDE.

The protein belongs to the mimivirus R73/L269/L862 family.

This is an uncharacterized protein from Acanthamoeba polyphaga mimivirus (APMV).